A 195-amino-acid chain; its full sequence is Dephospho-CoA kinase (195 aa).

The region spanning 3–195 (IIGLTGSIAM…FSIIENLLKN (193 aa)) is the DPCK domain. 11 to 16 (AMGKST) contacts ATP.

This sequence belongs to the CoaE family.

It localises to the cytoplasm. The enzyme catalyses 3'-dephospho-CoA + ATP = ADP + CoA + H(+). It functions in the pathway cofactor biosynthesis; coenzyme A biosynthesis; CoA from (R)-pantothenate: step 5/5. Functionally, catalyzes the phosphorylation of the 3'-hydroxyl group of dephosphocoenzyme A to form coenzyme A. The protein is Dephospho-CoA kinase of Bartonella quintana (strain Toulouse) (Rochalimaea quintana).